Reading from the N-terminus, the 62-residue chain is Large ribosomal subunit protein bL32 (62 aa).

It belongs to the bacterial ribosomal protein bL32 family.

This is Large ribosomal subunit protein bL32 from Levilactobacillus brevis (strain ATCC 367 / BCRC 12310 / CIP 105137 / JCM 1170 / LMG 11437 / NCIMB 947 / NCTC 947) (Lactobacillus brevis).